A 165-amino-acid polypeptide reads, in one-letter code: Endoribonuclease YbeY (165 aa).

Residues His-131, His-135, and His-141 each coordinate Zn(2+).

This sequence belongs to the endoribonuclease YbeY family. Requires Zn(2+) as cofactor.

It localises to the cytoplasm. Functionally, single strand-specific metallo-endoribonuclease involved in late-stage 70S ribosome quality control and in maturation of the 3' terminus of the 16S rRNA. This is Endoribonuclease YbeY from Agathobacter rectalis (strain ATCC 33656 / DSM 3377 / JCM 17463 / KCTC 5835 / VPI 0990) (Eubacterium rectale).